Here is a 1479-residue protein sequence, read N- to C-terminus: ABC transporter ecdL (1479 aa).

The next 3 membrane-spanning stretches (helical) occupy residues 32–52 (LLFE…SVAL), 82–102 (LSNA…WLSF), and 142–162 (IASI…VEAM). N-linked (GlcNAc...) asparagine glycosylation is found at asparagine 183 and asparagine 234. 2 helical membrane passes run 251–271 (WGGF…PFLV) and 291–311 (SGLI…TAAF). The ABC transmembrane type-1 1 domain occupies 258–535 (LCLIGVNYAQ…FVESLMGLRQ (278 aa)). A glycan (N-linked (GlcNAc...) asparagine) is linked at asparagine 345. 2 helical membrane passes run 365–382 (LHET…LWLL) and 391–411 (VAAA…SGLL). Asparagine 427 carries an N-linked (GlcNAc...) asparagine glycan. Helical transmembrane passes span 469-489 (LLVA…TFAF) and 503-523 (PLLA…GQAV). The ABC transporter 1 domain occupies 607–835 (IVLQNHTASW…GSSLRLEELV (229 aa)). N-linked (GlcNAc...) asparagine glycosylation is found at asparagine 611 and asparagine 628. Residue 641-648 (GPIGSGKS) coordinates ATP. N-linked (GlcNAc...) asparagine glycans are attached at residues asparagine 793 and asparagine 797. 5 helical membrane-spanning segments follow: residues 885–905 (TIGW…VVAL), 955–975 (LFAV…LHLM), 1028–1048 (ALIG…VIVY), 1052–1072 (YLAA…MFYL), and 1135–1155 (IWLT…LVSI). One can recognise an ABC transmembrane type-1 2 domain in the interval 932–1193 (IWLKFWTEAN…LVYNWTALEN (262 aa)). The N-linked (GlcNAc...) asparagine glycan is linked to asparagine 1161. The helical transmembrane segment at 1165–1185 (ASIGLALVNLIAFGANMKGLV) threads the bilayer. N-linked (GlcNAc...) asparagine glycosylation occurs at asparagine 1187. The ABC transporter 2 domain maps to 1230 to 1461 (IKFKSVTASY…RSIFASLLRS (232 aa)). 1264 to 1271 (GRTGCGKS) lines the ATP pocket. The interval 1460–1479 (RSGDEEPGNGHKHESEGEEE) is disordered. Basic and acidic residues predominate over residues 1461 to 1479 (SGDEEPGNGHKHESEGEEE).

Belongs to the ABC transporter superfamily. ABCC family. Conjugate transporter (TC 3.A.1.208) subfamily.

It localises to the cell membrane. Its function is as follows. ABC transporter; part of the gene cluster that mediates the biosynthesis of echinocandin B, a fungal lipidated cyclic hexapeptide that acts as an antifungal agent. In Aspergillus rugulosus (Emericella rugulosa), this protein is ABC transporter ecdL.